Reading from the N-terminus, the 344-residue chain is ATPase GET3 (344 aa).

26–33 (KGGVGKTT) is a binding site for ATP. Residue Asp-57 is part of the active site. Residues Glu-239 and Asn-266 each contribute to the ATP site. Residues Cys-276 and Cys-279 each coordinate Zn(2+).

This sequence belongs to the arsA ATPase family. Homodimer. Component of the Golgi to ER traffic (GET) complex, which is composed of GET1, GET2 and GET3. Within the complex, GET1 and GET2 form a heterotetramer which is stabilized by phosphatidylinositol binding and which binds to the GET3 homodimer. Interacts with the chloride channel protein GEF1.

It localises to the cytoplasm. It is found in the endoplasmic reticulum. The protein resides in the golgi apparatus. In terms of biological role, ATPase required for the post-translational delivery of tail-anchored (TA) proteins to the endoplasmic reticulum. Recognizes and selectively binds the transmembrane domain of TA proteins in the cytosol. This complex then targets to the endoplasmic reticulum by membrane-bound receptors GET1 and GET2, where the tail-anchored protein is released for insertion. This process is regulated by ATP binding and hydrolysis. ATP binding drives the homodimer towards the closed dimer state, facilitating recognition of newly synthesized TA membrane proteins. ATP hydrolysis is required for insertion. Subsequently, the homodimer reverts towards the open dimer state, lowering its affinity for the GET1-GET2 receptor, and returning it to the cytosol to initiate a new round of targeting. Cooperates with the HDEL receptor ERD2 to mediate the ATP-dependent retrieval of resident ER proteins that contain a C-terminal H-D-E-L retention signal from the Golgi to the ER. Involved in low-level resistance to the oxyanions arsenite and arsenate, and in heat tolerance. This chain is ATPase GET3, found in Komagataella phaffii (strain GS115 / ATCC 20864) (Yeast).